The following is a 294-amino-acid chain: 33 kDa chaperonin (294 aa).

Intrachain disulfides connect C239/C241 and C272/C275.

Belongs to the HSP33 family. Under oxidizing conditions two disulfide bonds are formed involving the reactive cysteines. Under reducing conditions zinc is bound to the reactive cysteines and the protein is inactive.

Its subcellular location is the cytoplasm. Its function is as follows. Redox regulated molecular chaperone. Protects both thermally unfolding and oxidatively damaged proteins from irreversible aggregation. Plays an important role in the bacterial defense system toward oxidative stress. This chain is 33 kDa chaperonin, found in Listeria innocua serovar 6a (strain ATCC BAA-680 / CLIP 11262).